Consider the following 180-residue polypeptide: Endoribonuclease YbeY (180 aa).

Residues H136, H140, and H146 each coordinate Zn(2+).

Belongs to the endoribonuclease YbeY family. Requires Zn(2+) as cofactor.

The protein localises to the cytoplasm. Single strand-specific metallo-endoribonuclease involved in late-stage 70S ribosome quality control and in maturation of the 3' terminus of the 16S rRNA. The protein is Endoribonuclease YbeY of Synechococcus sp. (strain CC9902).